Here is a 142-residue protein sequence, read N- to C-terminus: Large ribosomal subunit protein uL13 (142 aa).

Belongs to the universal ribosomal protein uL13 family. In terms of assembly, part of the 50S ribosomal subunit.

Functionally, this protein is one of the early assembly proteins of the 50S ribosomal subunit, although it is not seen to bind rRNA by itself. It is important during the early stages of 50S assembly. The protein is Large ribosomal subunit protein uL13 of Burkholderia pseudomallei (strain 1106a).